Reading from the N-terminus, the 312-residue chain is Acetaldehyde dehydrogenase 2 (312 aa).

11 to 14 (SGNI) is a binding site for NAD(+). Catalysis depends on Cys-129, which acts as the Acyl-thioester intermediate. NAD(+) contacts are provided by residues 160 to 168 (SAGPGTRAN) and Asn-287.

Belongs to the acetaldehyde dehydrogenase family.

The enzyme catalyses acetaldehyde + NAD(+) + CoA = acetyl-CoA + NADH + H(+). This Novosphingobium aromaticivorans (strain ATCC 700278 / DSM 12444 / CCUG 56034 / CIP 105152 / NBRC 16084 / F199) protein is Acetaldehyde dehydrogenase 2.